The sequence spans 173 residues: Adenine phosphoribosyltransferase (173 aa).

Belongs to the purine/pyrimidine phosphoribosyltransferase family. As to quaternary structure, homodimer.

It is found in the cytoplasm. The catalysed reaction is AMP + diphosphate = 5-phospho-alpha-D-ribose 1-diphosphate + adenine. It functions in the pathway purine metabolism; AMP biosynthesis via salvage pathway; AMP from adenine: step 1/1. Functionally, catalyzes a salvage reaction resulting in the formation of AMP, that is energically less costly than de novo synthesis. This is Adenine phosphoribosyltransferase from Caldanaerobacter subterraneus subsp. tengcongensis (strain DSM 15242 / JCM 11007 / NBRC 100824 / MB4) (Thermoanaerobacter tengcongensis).